Here is a 96-residue protein sequence, read N- to C-terminus: Tenecin-3 (96 aa).

An N-terminal signal peptide occupies residues 1–18 (MKTFVICLILVVAVSAAP). Residues 19–96 (DHHDGHLGGH…HQGGYKTHGH (78 aa)) are disordered. 12 tandem repeats follow at residues 23–26 (GHLG), 31–34 (GHQG), 35–38 (GQQG), 39–42 (GHLG), 43–46 (GQQG), 47–50 (GHLG), 51–54 (GHQG), 59–62 (GHLG), 63–66 (GHQG), 67–70 (GIGG), 77–80 (GQHG), and 86–89 (GHQG). A 12 X 4 AA repeats of G-X-X-G region spans residues 23 to 89 (GHLGGHQTGH…GPGTGAGHQG (67 aa)). Residues 26–89 (GGHQTGHQGG…GPGTGAGHQG (64 aa)) show a composition bias toward gly residues.

The protein to H.diomphalia holotricin 3.

It is found in the secreted. Functionally, antifungal heat stable protein produced in response to injury. It is active against C.albicans. No antibacterial activity against Gram-positive and Gram-negative bacteria. The protein is Tenecin-3 of Tenebrio molitor (Yellow mealworm beetle).